The following is a 205-amino-acid chain: Holliday junction branch migration complex subunit RuvA (205 aa).

Residues 1–64 (MIGKLKGLID…EDQIKLFGFR (64 aa)) are domain I. The domain II stretch occupies residues 65–143 (SDVEREWFRL…AFADVDPGVI (79 aa)). Residues 144 to 154 (RLSGAIEDSRA) form a flexible linker region. Residues 154–205 (APQPIADAISALINLGYGQPQAAAAIAAASRAAGDKAETAQLIRLGLKELAK) are domain III.

Belongs to the RuvA family. In terms of assembly, homotetramer. Forms an RuvA(8)-RuvB(12)-Holliday junction (HJ) complex. HJ DNA is sandwiched between 2 RuvA tetramers; dsDNA enters through RuvA and exits via RuvB. An RuvB hexamer assembles on each DNA strand where it exits the tetramer. Each RuvB hexamer is contacted by two RuvA subunits (via domain III) on 2 adjacent RuvB subunits; this complex drives branch migration. In the full resolvosome a probable DNA-RuvA(4)-RuvB(12)-RuvC(2) complex forms which resolves the HJ.

It localises to the cytoplasm. Its function is as follows. The RuvA-RuvB-RuvC complex processes Holliday junction (HJ) DNA during genetic recombination and DNA repair, while the RuvA-RuvB complex plays an important role in the rescue of blocked DNA replication forks via replication fork reversal (RFR). RuvA specifically binds to HJ cruciform DNA, conferring on it an open structure. The RuvB hexamer acts as an ATP-dependent pump, pulling dsDNA into and through the RuvAB complex. HJ branch migration allows RuvC to scan DNA until it finds its consensus sequence, where it cleaves and resolves the cruciform DNA. The chain is Holliday junction branch migration complex subunit RuvA from Bradyrhizobium sp. (strain BTAi1 / ATCC BAA-1182).